The primary structure comprises 546 residues: CTP synthase (546 aa).

An amidoligase domain region spans residues 1-266 (MTTNYIFVTG…DDLVCARFGI (266 aa)). S14 contributes to the CTP binding site. S14 is a UTP binding site. Residues 15 to 20 (SLGKGI) and D72 contribute to the ATP site. Residues D72 and E140 each coordinate Mg(2+). Residues 147–149 (DIE), 187–192 (KTKPTQ), and K223 contribute to the CTP site. Residues 187 to 192 (KTKPTQ) and K223 each bind UTP. 239–241 (KDV) contacts ATP. One can recognise a Glutamine amidotransferase type-1 domain in the interval 291 to 542 (TIGMVGKYIE…VKAAGQNARG (252 aa)). G352 is a binding site for L-glutamine. C379 functions as the Nucleophile; for glutamine hydrolysis in the catalytic mechanism. Residues 380-383 (LGMQ), E403, and R470 each bind L-glutamine. Active-site residues include H515 and E517.

Belongs to the CTP synthase family. As to quaternary structure, homotetramer.

It catalyses the reaction UTP + L-glutamine + ATP + H2O = CTP + L-glutamate + ADP + phosphate + 2 H(+). The enzyme catalyses L-glutamine + H2O = L-glutamate + NH4(+). It carries out the reaction UTP + NH4(+) + ATP = CTP + ADP + phosphate + 2 H(+). Its pathway is pyrimidine metabolism; CTP biosynthesis via de novo pathway; CTP from UDP: step 2/2. With respect to regulation, allosterically activated by GTP, when glutamine is the substrate; GTP has no effect on the reaction when ammonia is the substrate. The allosteric effector GTP functions by stabilizing the protein conformation that binds the tetrahedral intermediate(s) formed during glutamine hydrolysis. Inhibited by the product CTP, via allosteric rather than competitive inhibition. Catalyzes the ATP-dependent amination of UTP to CTP with either L-glutamine or ammonia as the source of nitrogen. Regulates intracellular CTP levels through interactions with the four ribonucleotide triphosphates. This is CTP synthase from Vibrio campbellii (strain ATCC BAA-1116).